A 555-amino-acid polypeptide reads, in one-letter code: Probable portal protein (555 aa).

Belongs to the podoviridae head-to-tail connector protein family. As to quaternary structure, homododecamer.

Its subcellular location is the virion. Its function is as follows. Forms the portal vertex of the capsid. This portal plays critical roles in head assembly, genome packaging, neck/tail attachment, and genome ejection. The portal protein multimerizes as a single ring-shaped homododecamer arranged around a central channel. The protein is Probable portal protein of Bordetella bronchiseptica (Alcaligenes bronchisepticus).